We begin with the raw amino-acid sequence, 181 residues long: uncharacterized protein (181 aa).

Residues 1–22 (MNKKSLLVVLVIALAVVPFAAT) form the signal peptide.

This is an uncharacterized protein from Halorubrum pleomorphic virus 1 (HRPV-1).